The sequence spans 780 residues: ATPase family gene 2 protein (780 aa).

Positions 1–23 are enriched in low complexity; it reads MAPKSSSSGSKKKSSASSNSADA. Positions 1–26 are disordered; it reads MAPKSSSSGSKKKSSASSNSADAKAS. ATP-binding positions include 286–293 and 557–564; these read GPPGTGKT and GPPGCSKT.

Belongs to the AAA ATPase family. AFG2 subfamily. As to quaternary structure, homohexamer; ATP binding induces oligomerization. Forms a ring-shaped particle of about 12 nm diameter, that displays 6-fold radial symmetry. Associates with cytoplasmic pre-60S ribosomal particles containing ARX1, ALB1, RLP24 and NOG1. Binds to pre-60S ribosomal particles soon after their export from the nucleus and is released before REI1 and LSG1 are incorporated into the particles. Hexameric form interacts with RLP24 (via C-terminal); the interaction recruits AFG2 to pre-60S ribosomal particles and promotes AFG2 ATPase activity and RLP24 release from pre-60S ribosomal particles. Interacts (via N-terminus) with nucleoporin NUP116 (via N-terminus); the interaction is required for RLP24 release from pre-60S ribosomal particles.

Its subcellular location is the cytoplasm. It carries out the reaction ATP + H2O = ADP + phosphate + H(+). The hexamer is activated by RLP24 during pre-60S ribosomal particle maturation; RLP24 activates ATPase activity of both ATP-binding regions and increases cooperativity between AFG2 subunits. The second ATP-binding region is inhibited by diazaborine; the inhibition requires prior ATP binding specifically to the second ATP-binding region. In terms of biological role, ATP-dependent chaperone which uses the energy provided by ATP hydrolysis to generate mechanical force to disassemble protein complexes. Plays an essential role in the cytoplasmic maturation steps of pre-60S ribosomal particles by promoting the release of shuttling protein RLP24 from the pre-ribosomal particles. This step facilitates the subsequent release of other shuttling proteins such as NOG1 and allows the transition of the pre-ribosomal particles to later maturation forms that bind REI1. Essential for viability. The polypeptide is ATPase family gene 2 protein (Saccharomyces cerevisiae (strain ATCC 204508 / S288c) (Baker's yeast)).